Here is a 415-residue protein sequence, read N- to C-terminus: MDYIQEYVKPVDPEVAEAIEKEEARQNNKLELIASENFVSRAVMAAQGSVMTNKYAEGLPGARYYGGCEYVDIVEELARDRVKEIFGAEHANVQPHSGAQANTAVYFAALQPGQTIMGMNLNHGGHLTHGSKVNISGKYFNIVDYGVNRDTERIDYEELREIALKARPQMIVAGASAYPRILDFKKFREIADEAGALLFVDMAHIAGLVAAGLHPSPVPYADFVSSTTHKTLRGPRGGFILCRQEWANKIDKAVFPGIQGGPLMHVIAAKAVCFKEALTPEFKAYQQDIVNNAAILAKALMEQGLRVVSGGTDNHLMLVDVRPKGLNGRDAEAILESINITVNKNAIPFDPEKPTVTSGIRVGTPAVTSRALKGDDMRELARAITLVLDKHDSEEVKEEARRIVKALCDKYPLYT.

(6S)-5,6,7,8-tetrahydrofolate-binding positions include Leu121 and 125 to 127; that span reads GHL. Lys230 is modified (N6-(pyridoxal phosphate)lysine).

It belongs to the SHMT family. Homodimer. The cofactor is pyridoxal 5'-phosphate.

The protein localises to the cytoplasm. The enzyme catalyses (6R)-5,10-methylene-5,6,7,8-tetrahydrofolate + glycine + H2O = (6S)-5,6,7,8-tetrahydrofolate + L-serine. Its pathway is one-carbon metabolism; tetrahydrofolate interconversion. The protein operates within amino-acid biosynthesis; glycine biosynthesis; glycine from L-serine: step 1/1. Catalyzes the reversible interconversion of serine and glycine with tetrahydrofolate (THF) serving as the one-carbon carrier. This reaction serves as the major source of one-carbon groups required for the biosynthesis of purines, thymidylate, methionine, and other important biomolecules. Also exhibits THF-independent aldolase activity toward beta-hydroxyamino acids, producing glycine and aldehydes, via a retro-aldol mechanism. This is Serine hydroxymethyltransferase from Syntrophomonas wolfei subsp. wolfei (strain DSM 2245B / Goettingen).